The following is a 517-amino-acid chain: Nuclear transcription factor Y subunit alpha (517 aa).

Over residues 1–11 (MNQINYLTSER) the composition is skewed to polar residues. 4 disordered regions span residues 1–95 (MNQI…MDIH), 121–183 (RIDY…NFNY), 252–281 (ESEN…RGCG), and 304–517 (AAAN…NNRS). Composition is skewed to low complexity over residues 26–81 (NNSS…SSSS) and 126–183 (NNNN…NFNY). The Subunit association domain (SAD) motif lies at 232-255 (YVNAKQYNRILKRRAARAKLESEN). Residues 262–287 (KAYQHESRHQHAIRRQRGCGGRFLTK) constitute a DNA-binding region (NFYA/HAP2-type). A compositionally biased stretch (low complexity) spans 304 to 345 (AAANPNASSTSTTTSNITNNNNNNNNNNNTNNNNNNNNTNVN). Residues 359–371 (SDDDIENDVENDS) show a composition bias toward acidic residues. 2 stretches are compositionally biased toward low complexity: residues 377–388 (KNNSNSPNQSSS) and 408–423 (NNNI…NNNN). Polar residues predominate over residues 438–447 (PLLNNGHIQA). A compositionally biased stretch (low complexity) spans 448-517 (QQNQSPSSSP…PLSNFSNNRS (70 aa)).

It belongs to the NFYA/HAP2 subunit family. Heterotrimeric transcription factor composed of three components, nfyA, nfyB and nfyC. nfyB and nfyC must interact and dimerize for nfyA association and DNA binding.

The protein localises to the nucleus. Functionally, component of the NF-Y/HAP transcription factor complex. The NF-Y complex stimulates the transcription of various genes by recognizing and binding to a CCAAT motif in promoters. The protein is Nuclear transcription factor Y subunit alpha (nfyA) of Dictyostelium discoideum (Social amoeba).